A 121-amino-acid chain; its full sequence is Fluoride-specific ion channel FluC 1 (121 aa).

4 consecutive transmembrane segments (helical) span residues 3–23 (YVYI…ISFL), 35–55 (VANL…IAFF), 64–84 (AITT…LELI), and 92–112 (FITL…LCYV). Na(+) contacts are provided by G71 and T74.

The protein belongs to the fluoride channel Fluc/FEX (TC 1.A.43) family.

The protein localises to the cell membrane. The enzyme catalyses fluoride(in) = fluoride(out). Na(+) is not transported, but it plays an essential structural role and its presence is essential for fluoride channel function. In terms of biological role, fluoride-specific ion channel. Important for reducing fluoride concentration in the cell, thus reducing its toxicity. The chain is Fluoride-specific ion channel FluC 1 from Staphylococcus aureus (strain bovine RF122 / ET3-1).